The primary structure comprises 318 residues: Cephalosporin-C deacetylase (318 aa).

Y91 is a substrate binding site. The Nucleophile role is filled by S181. Catalysis depends on charge relay system residues D269 and H298.

It belongs to the carbohydrate esterase 7 family. Homohexamer.

The protein resides in the cytoplasm. It catalyses the reaction Deacetylation of xylans and xylo-oligosaccharides.. The enzyme catalyses cephalosporin C + H2O = deacetylcephalosporin C + acetate + H(+). Esterase that removed acetyl groups from a number of O-acetylated small substrates, such as acetylated xylose, short xylooligosaccharides and cephalosporin C. Has no activity towards polymeric acetylated xylan. Cannot cleave amide linkages. This Bacillus subtilis (strain 168) protein is Cephalosporin-C deacetylase (cah).